A 1106-amino-acid chain; its full sequence is Platelet-derived growth factor receptor beta (1106 aa).

The signal sequence occupies residues 1–32; the sequence is MRLPGAMPALALKGELLLLSLLLLLEPQISQG. 5 consecutive Ig-like C2-type domains span residues 33–120, 129–210, 214–309, 331–403, and 416–524; these read LVVT…YIFV, PNDA…YRLQ, INVS…INIT, HRSR…HEDA, and PVRV…VIVV. Residues 33–532 lie on the Extracellular side of the membrane; sequence LVVTPPGPEL…VVPHSLPFKV (500 aa). N-linked (GlcNAc...) asparagine glycans are attached at residues Asn45, Asn89, and Asn103. An intrachain disulfide couples Cys54 to Cys100. An intrachain disulfide couples Cys149 to Cys190. Asn215 and Asn230 each carry an N-linked (GlcNAc...) asparagine glycan. A disulfide bridge links Cys235 with Cys291. N-linked (GlcNAc...) asparagine glycans are attached at residues Asn292, Asn307, Asn354, Asn371, Asn468, and Asn479. Cys436 and Cys508 are oxidised to a cystine. The chain crosses the membrane as a helical span at residues 533-553; that stretch reads VVISAILALVVLTIISLIILI. The Cytoplasmic segment spans residues 554–1106; sequence MLWQKKPRYE…PRAEAEDSFL (553 aa). 3 positions are modified to phosphotyrosine; by autocatalysis: Tyr562, Tyr579, and Tyr581. Positions 600–962 constitute a Protein kinase domain; the sequence is LVLGRTLGSG…QLVLLLERLL (363 aa). Residues 606 to 614 and Lys634 each bind ATP; that span reads LGSGAFGQV. A Phosphotyrosine; by ABL1 and ABL2 modification is found at Tyr686. A phosphotyrosine; by autocatalysis mark is found at Tyr716, Tyr740, Tyr751, Tyr763, Tyr771, Tyr775, and Tyr778. Asp826 functions as the Proton acceptor in the catalytic mechanism. Tyr857 bears the Phosphotyrosine; by autocatalysis mark. Phosphotyrosine; by ABL1 and ABL2 occurs at positions 934 and 970. Phosphotyrosine; by autocatalysis is present on residues Tyr1009 and Tyr1021. The tract at residues 1019 to 1106 is disordered; it reads NDYIIPLPDP…PRAEAEDSFL (88 aa). Residues 1043-1060 show a composition bias toward polar residues; the sequence is SLASSTLNEVNTSSTISC. Acidic residues predominate over residues 1066–1088; that stretch reads PQDEPEPEPQLELQVEPEPELEQ.

Belongs to the protein kinase superfamily. Tyr protein kinase family. CSF-1/PDGF receptor subfamily. Interacts with homodimeric PDGFB and PDGFD, and with heterodimers formed by PDGFA and PDGFB. May also interact with homodimeric PDGFC. Monomer in the absence of bound ligand. Interaction with homodimeric PDGFB, heterodimers formed by PDGFA and PDGFB or homodimeric PDGFD, leads to receptor dimerization, where both PDGFRA homodimers and heterodimers with PDGFRB are observed. Interacts with SH2B2/APS. Interacts directly (tyrosine phosphorylated) with SHB. Interacts (tyrosine phosphorylated) with PIK3R1 and RASA1. Interacts (tyrosine phosphorylated) with CBL. Interacts (tyrosine phosphorylated) with SRC and SRC family kinases. Interacts (tyrosine phosphorylated) with PIK3C2B, maybe indirectly. Interacts (tyrosine phosphorylated) with SHC1, GRB7, GRB10 and NCK1. Interaction with GRB2 is mediated by SHC1. Interacts (via C-terminus) with NHERF1. In terms of processing, autophosphorylated on tyrosine residues upon ligand binding. Autophosphorylation occurs in trans, i.e. one subunit of the dimeric receptor phosphorylates tyrosine residues on the other subunit. Phosphorylation at Tyr-579, and to a lesser degree, at Tyr-581, is important for interaction with SRC family kinases. Phosphorylation at Tyr-740 and Tyr-751 is important for interaction with PIK3R1. Phosphorylation at Tyr-751 is important for interaction with NCK1. Phosphorylation at Tyr-771 and Tyr-857 is important for interaction with RASA1/GAP. Phosphorylation at Tyr-857 is important for efficient phosphorylation of PLCG1 and PTPN11, resulting in increased phosphorylation of AKT1, MAPK1/ERK2 and/or MAPK3/ERK1, PDCD6IP/ALIX and STAM, and in increased cell proliferation. Phosphorylation at Tyr-1009 is important for interaction with PTPN11. Phosphorylation at Tyr-1009 and Tyr-1021 is important for interaction with PLCG1. Phosphorylation at Tyr-1021 is important for interaction with CBL; PLCG1 and CBL compete for the same binding site. Dephosphorylated by PTPRJ at Tyr-751, Tyr-857, Tyr-1009 and Tyr-1021. Dephosphorylated by PTPN2 at Tyr-579 and Tyr-1021. N-glycosylated. Post-translationally, ubiquitinated. After autophosphorylation, the receptor is polyubiquitinated, leading to its degradation.

The protein localises to the cell membrane. It localises to the cytoplasmic vesicle. Its subcellular location is the lysosome lumen. The enzyme catalyses L-tyrosyl-[protein] + ATP = O-phospho-L-tyrosyl-[protein] + ADP + H(+). Its activity is regulated as follows. Present in an inactive conformation in the absence of bound ligand. Binding of PDGFB and/or PDGFD leads to dimerization and activation by autophosphorylation on tyrosine residues. Inhibited by imatinib. In terms of biological role, tyrosine-protein kinase that acts as a cell-surface receptor for homodimeric PDGFB and PDGFD and for heterodimers formed by PDGFA and PDGFB, and plays an essential role in the regulation of embryonic development, cell proliferation, survival, differentiation, chemotaxis and migration. Plays an essential role in blood vessel development by promoting proliferation, migration and recruitment of pericytes and smooth muscle cells to endothelial cells. Plays a role in the migration of vascular smooth muscle cells and the formation of neointima at vascular injury sites. Required for normal development of the cardiovascular system. Required for normal recruitment of pericytes (mesangial cells) in the kidney glomerulus, and for normal formation of a branched network of capillaries in kidney glomeruli. Promotes rearrangement of the actin cytoskeleton and the formation of membrane ruffles. Binding of its cognate ligands - homodimeric PDGFB, heterodimers formed by PDGFA and PDGFB or homodimeric PDGFD -leads to the activation of several signaling cascades; the response depends on the nature of the bound ligand and is modulated by the formation of heterodimers between PDGFRA and PDGFRB. Phosphorylates PLCG1, PIK3R1, PTPN11, RASA1/GAP, CBL, SHC1 and NCK1. Activation of PLCG1 leads to the production of the cellular signaling molecules diacylglycerol and inositol 1,4,5-trisphosphate, mobilization of cytosolic Ca(2+) and the activation of protein kinase C. Phosphorylation of PIK3R1, the regulatory subunit of phosphatidylinositol 3-kinase, leads to the activation of the AKT1 signaling pathway. Phosphorylation of SHC1, or of the C-terminus of PTPN11, creates a binding site for GRB2, resulting in the activation of HRAS, RAF1 and down-stream MAP kinases, including MAPK1/ERK2 and/or MAPK3/ERK1. Promotes phosphorylation and activation of SRC family kinases. Promotes phosphorylation of PDCD6IP/ALIX and STAM. Receptor signaling is down-regulated by protein phosphatases that dephosphorylate the receptor and its down-stream effectors, and by rapid internalization of the activated receptor. This Homo sapiens (Human) protein is Platelet-derived growth factor receptor beta (PDGFRB).